A 151-amino-acid chain; its full sequence is Acidic phospholipase A2 3 (151 aa).

The signal sequence occupies residues 1–27 (MYPAHLLVLLAVCVSLLGAASIPARPL). 7 disulfide bridges follow: Cys38/Cys104, Cys54/Cys151, Cys56/Cys72, Cys71/Cys132, Cys78/Cys125, Cys88/Cys118, and Cys111/Cys123. Positions 55, 57, and 59 each coordinate Ca(2+). The active site involves His75. Asp76 contributes to the Ca(2+) binding site. The active site involves Asp126.

This sequence belongs to the phospholipase A2 family. Group I subfamily. D49 sub-subfamily. Requires Ca(2+) as cofactor. In terms of tissue distribution, expressed by the venom gland.

Its subcellular location is the secreted. The catalysed reaction is a 1,2-diacyl-sn-glycero-3-phosphocholine + H2O = a 1-acyl-sn-glycero-3-phosphocholine + a fatty acid + H(+). Functionally, PLA2 catalyzes the calcium-dependent hydrolysis of the 2-acyl groups in 3-sn-phosphoglycerides. In Tropidechis carinatus (Australian rough-scaled snake), this protein is Acidic phospholipase A2 3.